The chain runs to 104 residues: Cytochrome c-551 (104 aa).

The first 22 residues, 1 to 22, serve as a signal peptide directing secretion; sequence MKPYALLSLLATGTLLAQGAWA. The heme c site is built by C34, C37, H38, and M83.

Binds 1 heme c group covalently per subunit.

It localises to the periplasm. Electron donor for cytochrome cd1 in nitrite and nitrate respiration. The sequence is that of Cytochrome c-551 (nirM) from Pseudomonas aeruginosa (strain ATCC 15692 / DSM 22644 / CIP 104116 / JCM 14847 / LMG 12228 / 1C / PRS 101 / PAO1).